A 255-amino-acid polypeptide reads, in one-letter code: Electron transfer flavoprotein subunit beta (255 aa).

Position 2 is an N-acetylalanine (Ala2). Residues Ala9, 39-42 (NPFC), Cys66, and 123-134 (GKQAIDDDCNQT) each bind AMP. Residues 183-205 (ADLRLNEPRYATLPNIMKAKKKK) are recognition loop. Lys200 carries the N6,N6,N6-trimethyllysine; by ETFBKMT; alternate modification. Lys200 carries the post-translational modification N6-acetyllysine; alternate. Lys200 carries the post-translational modification N6-methyllysine; alternate. An N6,N6,N6-trimethyllysine; by ETFBKMT modification is found at Lys203. At Lys210 the chain carries N6-acetyllysine; alternate. The residue at position 210 (Lys210) is an N6-succinyllysine; alternate. A phosphoserine mark is found at Ser223 and Ser226. Position 238 is an N6-acetyllysine (Lys238). Lys248 is subject to N6-acetyllysine; alternate. Lys248 carries the post-translational modification N6-succinyllysine; alternate.

This sequence belongs to the ETF beta-subunit/FixA family. As to quaternary structure, heterodimer composed of ETFA and ETFB. Identified in a complex that contains ETFA, ETFB and ETFRF1. Interacts with ACADM. In terms of processing, methylated. Trimethylation at Lys-200 and Lys-203 may negatively regulate the activity in electron transfer from acyl-CoA dehydrogenases.

It is found in the mitochondrion matrix. In terms of biological role, heterodimeric electron transfer flavoprotein that accepts electrons from several mitochondrial dehydrogenases, including acyl-CoA dehydrogenases, glutaryl-CoA and sarcosine dehydrogenase. It transfers the electrons to the main mitochondrial respiratory chain via ETF-ubiquinone oxidoreductase. Required for normal mitochondrial fatty acid oxidation and normal amino acid metabolism. ETFB binds an AMP molecule that probably has a purely structural role. This Bos taurus (Bovine) protein is Electron transfer flavoprotein subunit beta.